The primary structure comprises 449 residues: UDP-N-acetylmuramoylalanine--D-glutamate ligase (449 aa).

An ATP-binding site is contributed by Gly117–Thr123.

The protein belongs to the MurCDEF family.

Its subcellular location is the cytoplasm. It catalyses the reaction UDP-N-acetyl-alpha-D-muramoyl-L-alanine + D-glutamate + ATP = UDP-N-acetyl-alpha-D-muramoyl-L-alanyl-D-glutamate + ADP + phosphate + H(+). It functions in the pathway cell wall biogenesis; peptidoglycan biosynthesis. Its function is as follows. Cell wall formation. Catalyzes the addition of glutamate to the nucleotide precursor UDP-N-acetylmuramoyl-L-alanine (UMA). This chain is UDP-N-acetylmuramoylalanine--D-glutamate ligase, found in Exiguobacterium sibiricum (strain DSM 17290 / CCUG 55495 / CIP 109462 / JCM 13490 / 255-15).